The following is a 252-amino-acid chain: N-glycosylase/DNA lyase (252 aa).

Residues glutamine 32, serine 60, and tryptophan 71 each contribute to the 8-oxoguanine site. Residues 129–193 (KTYYSDMEKL…KDSRIEKYTL (65 aa)) are helix-hairpin-helix. Catalysis depends on lysine 153, which acts as the Schiff-base intermediate with DNA. Phenylalanine 157 and proline 183 together coordinate 8-oxoguanine. Residue aspartate 185 is part of the active site. 8-oxoguanine contacts are provided by aspartate 219 and tryptophan 223.

The protein belongs to the archaeal N-glycosylase/DNA lyase (AGOG) family.

The catalysed reaction is 2'-deoxyribonucleotide-(2'-deoxyribose 5'-phosphate)-2'-deoxyribonucleotide-DNA = a 3'-end 2'-deoxyribonucleotide-(2,3-dehydro-2,3-deoxyribose 5'-phosphate)-DNA + a 5'-end 5'-phospho-2'-deoxyribonucleoside-DNA + H(+). DNA repair enzyme that is part of the base excision repair (BER) pathway; protects from oxidative damage by removing the major product of DNA oxidation, 8-oxoguanine (GO), from single- and double-stranded DNA substrates. The polypeptide is N-glycosylase/DNA lyase (Methanococcus maripaludis (strain DSM 14266 / JCM 13030 / NBRC 101832 / S2 / LL)).